We begin with the raw amino-acid sequence, 208 residues long: FMN-dependent NADH:quinone oxidoreductase (208 aa).

FMN contacts are provided by residues 17 to 19 (SNS), 99 to 102 (MWNL), and 143 to 146 (SRGG).

Belongs to the azoreductase type 1 family. In terms of assembly, homodimer. Requires FMN as cofactor.

It catalyses the reaction 2 a quinone + NADH + H(+) = 2 a 1,4-benzosemiquinone + NAD(+). The enzyme catalyses N,N-dimethyl-1,4-phenylenediamine + anthranilate + 2 NAD(+) = 2-(4-dimethylaminophenyl)diazenylbenzoate + 2 NADH + 2 H(+). Quinone reductase that provides resistance to thiol-specific stress caused by electrophilic quinones. In terms of biological role, also exhibits azoreductase activity. Catalyzes the reductive cleavage of the azo bond in aromatic azo compounds to the corresponding amines. The sequence is that of FMN-dependent NADH:quinone oxidoreductase from Staphylococcus aureus (strain Mu50 / ATCC 700699).